The chain runs to 382 residues: Ribonuclease D (382 aa).

Positions 4 to 169 (ITTTAELASV…DVFAALDADL (166 aa)) constitute a 3'-5' exonuclease domain. The 82-residue stretch at 208–289 (KPKDLAVMME…QRGLARDPRE (82 aa)) folds into the HRDC domain.

It belongs to the RNase D family. The cofactor is a divalent metal cation.

The protein resides in the cytoplasm. The enzyme catalyses Exonucleolytic cleavage that removes extra residues from the 3'-terminus of tRNA to produce 5'-mononucleotides.. Functionally, exonuclease involved in the 3' processing of various precursor tRNAs. Initiates hydrolysis at the 3'-terminus of an RNA molecule and releases 5'-mononucleotides. This Nitrobacter hamburgensis (strain DSM 10229 / NCIMB 13809 / X14) protein is Ribonuclease D.